The sequence spans 202 residues: COMM domain-containing protein 10 (202 aa).

N-acetylalanine is present on Ala2. The region spanning 133–202 (KLETVGWQLN…TIQAQLDSLT (70 aa)) is the COMM domain. Ser155 carries the post-translational modification Phosphoserine.

It belongs to the COMM domain-containing protein 10 family. As to quaternary structure, component of the commander complex consisting of the CCC subcomplex and the retriever subcomplex. Component of the CCC (COMMD/CCDC22/CCDC93) subcomplex consisting of COMMD1, COMMD2, COMMD3, COMMD4, COMMD5, COMMD6, COMMD7, COMMD8, COMMD9, COMMD10, CCDC22 and CCDC93; within the complex forms a heterodimer with COMMD5. Interacts with RELA, RELB, NFKB1/p105, NFKB2/p100. Interacts with CCDC22, CCDC93, SCNN1B, CUL1, CUL2, CUL3, CUL4A, CUL4B, CUL7. Ubiquitous.

Its subcellular location is the cytoplasm. The protein localises to the nucleus. Functionally, scaffold protein in the commander complex that is essential for endosomal recycling of transmembrane cargos; the commander complex is composed of the CCC subcomplex and the retriever subcomplex. May modulate activity of cullin-RING E3 ubiquitin ligase (CRL) complexes. May down-regulate activation of NF-kappa-B. This Homo sapiens (Human) protein is COMM domain-containing protein 10 (COMMD10).